The chain runs to 232 residues: Orotidine 5'-phosphate decarboxylase (232 aa).

Residues D16, K38, 65 to 74 (DLKLHDIGNT), T119, R180, Q189, G209, and R210 contribute to the substrate site. The Proton donor role is filled by K67.

Belongs to the OMP decarboxylase family. Type 1 subfamily. As to quaternary structure, homodimer.

It catalyses the reaction orotidine 5'-phosphate + H(+) = UMP + CO2. It functions in the pathway pyrimidine metabolism; UMP biosynthesis via de novo pathway; UMP from orotate: step 2/2. Its function is as follows. Catalyzes the decarboxylation of orotidine 5'-monophosphate (OMP) to uridine 5'-monophosphate (UMP). This Methylorubrum populi (strain ATCC BAA-705 / NCIMB 13946 / BJ001) (Methylobacterium populi) protein is Orotidine 5'-phosphate decarboxylase.